The primary structure comprises 182 residues: Epididymal-specific lipocalin-10 (182 aa).

An N-terminal signal peptide occupies residues 1-19 (MKLEMALSIALALAVVSWT). 2 N-linked (GlcNAc...) asparagine glycosylation sites follow: Asn31 and Asn144. The cysteines at positions 85 and 176 are disulfide-linked. An N6-acetyllysine modification is found at Lys165.

Belongs to the calycin superfamily. Lipocalin family. As to expression, expressed in epididymis.

The protein localises to the secreted. In terms of biological role, may play a role in male fertility. May act as a retinoid carrier protein within the epididymis. The protein is Epididymal-specific lipocalin-10 (Lcn10) of Mus musculus (Mouse).